The primary structure comprises 158 residues: Cyclic pyranopterin monophosphate synthase (158 aa).

Substrate contacts are provided by residues 76–78 (LCH) and 114–115 (ME). The active site involves Asp129.

It belongs to the MoaC family. Homohexamer; trimer of dimers.

The enzyme catalyses (8S)-3',8-cyclo-7,8-dihydroguanosine 5'-triphosphate = cyclic pyranopterin phosphate + diphosphate. Its pathway is cofactor biosynthesis; molybdopterin biosynthesis. Its function is as follows. Catalyzes the conversion of (8S)-3',8-cyclo-7,8-dihydroguanosine 5'-triphosphate to cyclic pyranopterin monophosphate (cPMP). This chain is Cyclic pyranopterin monophosphate synthase, found in Shewanella baltica (strain OS155 / ATCC BAA-1091).